Here is a 65-residue protein sequence, read N- to C-terminus: Hirudin-2' (65 aa).

An interaction with thrombin active site region spans residues 1 to 3; that stretch reads ITY. 3 cysteine pairs are disulfide-bonded: C6/C14, C16/C28, and C22/C39. Residues 39 to 65 form a disordered region; the sequence is CVTGEGTPKPQSHNDGDFEEIPEEYLQ. Residue T45 is glycosylated (O-linked (GalNAc...) threonine). Residues 55–65 form an interaction with fibrinogen-binding exosite of thrombin region; the sequence is DFEEIPEEYLQ. The segment covering 55 to 65 has biased composition (acidic residues); that stretch reads DFEEIPEEYLQ. At Y63 the chain carries Sulfotyrosine.

This sequence belongs to the protease inhibitor I14 (hirudin) family.

The protein resides in the secreted. Functionally, hirudin is a potent thrombin-specific protease inhibitor. It forms a stable non-covalent complex with alpha-thrombin, thereby abolishing its ability to cleave fibrinogen. The protein is Hirudin-2' of Hirudo medicinalis (Medicinal leech).